Here is a 310-residue protein sequence, read N- to C-terminus: tRNA-cytidine(32) 2-sulfurtransferase (310 aa).

The short motif at 45 to 50 is the PP-loop motif element; that stretch reads SGGKDS. Residues Cys-120, Cys-123, and Cys-211 each coordinate [4Fe-4S] cluster.

The protein belongs to the TtcA family. As to quaternary structure, homodimer. Mg(2+) is required as a cofactor. The cofactor is [4Fe-4S] cluster.

Its subcellular location is the cytoplasm. The catalysed reaction is cytidine(32) in tRNA + S-sulfanyl-L-cysteinyl-[cysteine desulfurase] + AH2 + ATP = 2-thiocytidine(32) in tRNA + L-cysteinyl-[cysteine desulfurase] + A + AMP + diphosphate + H(+). It functions in the pathway tRNA modification. Functionally, catalyzes the ATP-dependent 2-thiolation of cytidine in position 32 of tRNA, to form 2-thiocytidine (s(2)C32). The sulfur atoms are provided by the cysteine/cysteine desulfurase (IscS) system. This chain is tRNA-cytidine(32) 2-sulfurtransferase, found in Shewanella baltica (strain OS195).